A 271-amino-acid polypeptide reads, in one-letter code: Phosphatidate cytidylyltransferase (271 aa).

8 helical membrane-spanning segments follow: residues 12-32, 53-73, 75-95, 111-131, 136-156, 174-194, 199-219, and 251-271; these read LLPIALGGFFLLEGAFFALFI, FGRVAYAATVAVLMVALYHLP, LAGAVLLLALVWWTLATVLVL, LGMGLLILLPAWQGLVLLKQW, GLIIAVMVLVWGADIGAYFSG, WEGVYGGLAASLAITLAVGLY, LGALLLALLGAALVVFVSIVG, and SLTAAIPVFAALLWAAGWGAP.

This sequence belongs to the CDS family.

Its subcellular location is the cell inner membrane. The enzyme catalyses a 1,2-diacyl-sn-glycero-3-phosphate + CTP + H(+) = a CDP-1,2-diacyl-sn-glycerol + diphosphate. It functions in the pathway phospholipid metabolism; CDP-diacylglycerol biosynthesis; CDP-diacylglycerol from sn-glycerol 3-phosphate: step 3/3. The chain is Phosphatidate cytidylyltransferase (cdsA) from Pseudomonas aeruginosa (strain ATCC 15692 / DSM 22644 / CIP 104116 / JCM 14847 / LMG 12228 / 1C / PRS 101 / PAO1).